The primary structure comprises 287 residues: Aquaporin PIP1-2 (287 aa).

The disordered stretch occupies residues Met1–Pro37. Residues Met1–Gly55 are Cytoplasmic-facing. Residues Ile56–Val76 traverse the membrane as a helical segment. Residues Val77–Gln89 lie on the Extracellular side of the membrane. A helical transmembrane segment spans residues Gly90–Ser110. Residues Gly111 to Ala133 lie on the Cytoplasmic side of the membrane. The NPA 1 signature appears at Asn115–Ala117. The helical transmembrane segment at Leu134–Phe154 threads the bilayer. The Extracellular portion of the chain corresponds to Gln155 to Lys175. The chain crosses the membrane as a helical span at residues Gly176–Ala196. Over Thr197 to Pro209 the chain is Cytoplasmic. The chain crosses the membrane as a helical span at residues Ile210–Ile230. Topologically, residues Thr231 to Trp257 are extracellular. The short motif at Asn236–Ala238 is the NPA 2 element. Residues Ile258–Ile278 traverse the membrane as a helical segment. At Arg279–Ser287 the chain is on the cytoplasmic side.

Belongs to the MIP/aquaporin (TC 1.A.8) family. PIP (TC 1.A.8.11) subfamily. In terms of tissue distribution, barely detectable in roots, leaves and fruits.

It localises to the cell membrane. In terms of biological role, water channel required to facilitate the transport of water across cell membrane; mercury-insensitive. Contributes to the tolerance to multiple abiotic stresses including salt (NaCl), cold and water deprivation, by modulating cytosolic K(+)/Na(+) ratio, maintaining osmotic balance, and reducing membrane injury (e.g. oxidative injury). The polypeptide is Aquaporin PIP1-2 (Musa acuminata subsp. malaccensis (Wild banana)).